A 252-amino-acid polypeptide reads, in one-letter code: Body wall muscle protein HR-29 (252 aa).

The residue at position 2 (serine 2) is an N-acetylserine. 3 consecutive repeat copies span residues arginine 37–serine 55, glutamine 56–serine 74, and glutamine 75–serine 93. A 3 X 19 AA approximate tandem repeats region spans residues arginine 37 to serine 93. Residues isoleucine 138–glutamate 249 enclose the sHSP domain.

Belongs to the small heat shock protein (HSP20) family. As to quaternary structure, exists as an oligomer.

The protein localises to the membrane. May be a component of myofibrils where it acts as a stabilizer. The protein is Body wall muscle protein HR-29 of Halocynthia roretzi (Sea squirt).